Consider the following 170-residue polypeptide: Adenine phosphoribosyltransferase (170 aa).

Belongs to the purine/pyrimidine phosphoribosyltransferase family. In terms of assembly, homodimer.

It localises to the cytoplasm. It carries out the reaction AMP + diphosphate = 5-phospho-alpha-D-ribose 1-diphosphate + adenine. It participates in purine metabolism; AMP biosynthesis via salvage pathway; AMP from adenine: step 1/1. Its function is as follows. Catalyzes a salvage reaction resulting in the formation of AMP, that is energically less costly than de novo synthesis. This chain is Adenine phosphoribosyltransferase, found in Bacillus pumilus (strain SAFR-032).